We begin with the raw amino-acid sequence, 177 residues long: Nucleoside triphosphate/diphosphate phosphatase (177 aa).

Arg-24 functions as the Proton donor in the catalytic mechanism. The Mg(2+) site is built by Asn-88, Asp-104, Asp-106, Asp-108, Asp-121, and Glu-124.

This sequence belongs to the Ntdp family. Mg(2+) serves as cofactor.

The catalysed reaction is a ribonucleoside 5'-triphosphate + H2O = a ribonucleoside 5'-diphosphate + phosphate + H(+). It catalyses the reaction a ribonucleoside 5'-diphosphate + H2O = a ribonucleoside 5'-phosphate + phosphate + H(+). Functionally, has nucleoside phosphatase activity towards nucleoside triphosphates and nucleoside diphosphates. This chain is Nucleoside triphosphate/diphosphate phosphatase, found in Geobacillus sp. (strain WCH70).